Here is a 174-residue protein sequence, read N- to C-terminus: FITAAFDIPQISTGDMLRAAIKAGTPLGLEAKKIIDEGGLVRDDIIIGMVKERIAQDDCKNGFLFDGFPRTLAQAEAMVEAGVDLDAVVEIDVPDSVIVDRMSGRRVHLASGRTYHVTYNPPKVEGKDDVTGEDLIQRDDDKEETVKKRLAVYHEQTEVLVDFYSKLEGEHAPK.

The tract at residues serine 12 to valine 41 is NMP. AMP-binding positions include threonine 13, arginine 18, glycine 39–valine 41, glycine 67–arginine 70, and glutamine 74. The interval glycine 104–aspartate 141 is LID. ATP contacts are provided by residues arginine 105 and threonine 114–tyrosine 115. Arginine 138 and arginine 149 together coordinate AMP.

Belongs to the adenylate kinase family. In terms of assembly, monomer.

Its subcellular location is the cytoplasm. The enzyme catalyses AMP + ATP = 2 ADP. The protein operates within purine metabolism; AMP biosynthesis via salvage pathway; AMP from ADP: step 1/1. Catalyzes the reversible transfer of the terminal phosphate group between ATP and AMP. Plays an important role in cellular energy homeostasis and in adenine nucleotide metabolism. In Neisseria cinerea, this protein is Adenylate kinase.